We begin with the raw amino-acid sequence, 210 residues long: MAIVLEAKERADKKRSTLHRIRSQGGIPAILYGKKVENKMIFVSTAELEKALREGGRTSLLTLKVGGEEHSVLLRELQRDPLRGHLLHADFQAVDMSTEVDIDVEVRLVGEAPGVKDGGVLQQNLHELSIRVLPANIPPVIEVDISGLQVGDTVTVGDVKTDGKFEINHEPSEVIATILPPQQEEEIDSGEQQEAGQPDAAEGRETTPEE.

The tract at residues 175–210 (IATILPPQQEEEIDSGEQQEAGQPDAAEGRETTPEE) is disordered. Residues 201–210 (AEGRETTPEE) are compositionally biased toward basic and acidic residues.

Belongs to the bacterial ribosomal protein bL25 family. CTC subfamily. Part of the 50S ribosomal subunit; part of the 5S rRNA/L5/L18/L25 subcomplex. Contacts the 5S rRNA. Binds to the 5S rRNA independently of L5 and L18.

Functionally, this is one of the proteins that binds to the 5S RNA in the ribosome where it forms part of the central protuberance. The protein is Large ribosomal subunit protein bL25 of Geobacillus kaustophilus (strain HTA426).